The sequence spans 434 residues: Cobyrinate a,c-diamide synthase (434 aa).

The GATase cobBQ-type domain maps to 239-430; the sequence is KMAIAYDPAF…SHLHFSNFQL (192 aa). Cys320 functions as the Nucleophile in the catalytic mechanism.

The protein belongs to the CobB/CbiA family. Mg(2+) serves as cofactor.

It carries out the reaction cob(II)yrinate + 2 L-glutamine + 2 ATP + 2 H2O = cob(II)yrinate a,c diamide + 2 L-glutamate + 2 ADP + 2 phosphate + 2 H(+). It functions in the pathway cofactor biosynthesis; adenosylcobalamin biosynthesis; cob(II)yrinate a,c-diamide from sirohydrochlorin (anaerobic route): step 10/10. Functionally, catalyzes the ATP-dependent amidation of the two carboxylate groups at positions a and c of cobyrinate, using either L-glutamine or ammonia as the nitrogen source. In Saccharolobus solfataricus (strain ATCC 35092 / DSM 1617 / JCM 11322 / P2) (Sulfolobus solfataricus), this protein is Cobyrinate a,c-diamide synthase.